Consider the following 146-residue polypeptide: Putative actin-depolymerizing factor 8 (146 aa).

The ADF-H domain maps to 14-144 (PAWIEVPEKS…DLEVLRGRAN (131 aa)).

The protein belongs to the actin-binding proteins ADF family.

Functionally, actin-depolymerizing protein. Severs actin filaments (F-actin) and binds to actin monomers. In Oryza sativa subsp. japonica (Rice), this protein is Putative actin-depolymerizing factor 8 (ADF8).